Here is a 360-residue protein sequence, read N- to C-terminus: Probable arginine kinase ZC434.8 (360 aa).

One can recognise a Phosphagen kinase N-terminal domain in the interval 10 to 92; it reads SIEEVYTKLQ…FNPVIEEYHN (83 aa). Substrate is bound at residue 65–69; sequence GVGIY. The region spanning 122–359 is the Phosphagen kinase C-terminal domain; that stretch reads FIVSTRIRCG…KKLIELEKAA (238 aa). ATP-binding positions include 125-129 and His189; that span reads STRIR. Glu229 is a substrate binding site. Residue Arg233 coordinates ATP. Residue Cys275 participates in substrate binding. ATP-binding positions include 284–288, 312–317, and Asp327; these read RASVH and RGIHGE. Glu317 contributes to the substrate binding site.

It belongs to the ATP:guanido phosphotransferase family.

It catalyses the reaction L-arginine + ATP = N(omega)-phospho-L-arginine + ADP + H(+). This Caenorhabditis elegans protein is Probable arginine kinase ZC434.8.